The sequence spans 709 residues: Polyribonucleotide nucleotidyltransferase (709 aa).

2 residues coordinate Mg(2+): aspartate 489 and aspartate 495. Residues 556-615 form the KH domain; sequence PKIDMIKIDVDKIKVVIGKGGETIDKIIAETGVKIDIDEEGNVSIFSSDQAAIDRTKDII. The region spanning 625–693 is the S1 motif domain; sequence GEVYHAKVVR…DKGRVDASMK (69 aa).

The protein belongs to the polyribonucleotide nucleotidyltransferase family. Requires Mg(2+) as cofactor.

It is found in the cytoplasm. The enzyme catalyses RNA(n+1) + phosphate = RNA(n) + a ribonucleoside 5'-diphosphate. Functionally, involved in mRNA degradation. Catalyzes the phosphorolysis of single-stranded polyribonucleotides processively in the 3'- to 5'-direction. This is Polyribonucleotide nucleotidyltransferase from Streptococcus agalactiae serotype V (strain ATCC BAA-611 / 2603 V/R).